We begin with the raw amino-acid sequence, 202 residues long: Ras-related protein Rab-18 (202 aa).

GTP-binding residues include serine 18, glycine 21, lysine 22, serine 23, serine 24, aspartate 35, proline 36, threonine 41, glycine 67, lysine 124, aspartate 126, and alanine 153. An Effector region motif is present at residues 38–46 (QAATIGVDF). 2 S-geranylgeranyl cysteine lipidation sites follow: cysteine 198 and cysteine 200.

It belongs to the small GTPase superfamily. Rab family.

Its subcellular location is the cell membrane. The catalysed reaction is GTP + H2O = GDP + phosphate + H(+). Functionally, the small GTPases Rab are key regulators of intracellular membrane trafficking, from the formation of transport vesicles to their fusion with membranes. Rabs cycle between an inactive GDP-bound form and an active GTP-bound form that is able to recruit to membranes different sets of downstream effectors directly responsible for vesicle formation, movement, tethering and fusion. This is Ras-related protein Rab-18 (RAB18A) from Lymnaea stagnalis (Great pond snail).